The chain runs to 337 residues: NADH-quinone oxidoreductase subunit H (337 aa).

8 consecutive transmembrane segments (helical) span residues I13 to L33, A82 to I102, V115 to G135, M154 to S174, G187 to A207, I248 to I268, I274 to V294, and V313 to D333.

The protein belongs to the complex I subunit 1 family. In terms of assembly, NDH-1 is composed of 14 different subunits. Subunits NuoA, H, J, K, L, M, N constitute the membrane sector of the complex.

The protein resides in the cell inner membrane. It catalyses the reaction a quinone + NADH + 5 H(+)(in) = a quinol + NAD(+) + 4 H(+)(out). NDH-1 shuttles electrons from NADH, via FMN and iron-sulfur (Fe-S) centers, to quinones in the respiratory chain. The immediate electron acceptor for the enzyme in this species is believed to be ubiquinone. Couples the redox reaction to proton translocation (for every two electrons transferred, four hydrogen ions are translocated across the cytoplasmic membrane), and thus conserves the redox energy in a proton gradient. This subunit may bind ubiquinone. In Rhodospirillum rubrum (strain ATCC 11170 / ATH 1.1.1 / DSM 467 / LMG 4362 / NCIMB 8255 / S1), this protein is NADH-quinone oxidoreductase subunit H.